The sequence spans 113 residues: Ribulose bisphosphate carboxylase small subunit (113 aa).

The protein belongs to the RuBisCO small chain family. In terms of assembly, heterohexadecamer of 8 large and 8 small subunits. Forms a CsoS2-CsoS1-RuBisCO complex.

It is found in the carboxysome. Its function is as follows. RuBisCO catalyzes two reactions: the carboxylation of D-ribulose 1,5-bisphosphate, the primary event in carbon dioxide fixation, as well as the oxidative fragmentation of the pentose substrate in the photorespiration process. Both reactions occur simultaneously and in competition at the same active site. Although the small subunit is not catalytic it is essential for maximal activity. The sequence is that of Ribulose bisphosphate carboxylase small subunit from Prochlorococcus marinus (strain MIT 9313).